Here is an 887-residue protein sequence, read N- to C-terminus: Golgin IMH1 (887 aa).

4 disordered regions span residues 16–50 (LAKG…EELP), 142–214 (QESL…MKSQ), 240–301 (GASQ…SAGD), and 783–822 (LKMS…SISS). Composition is skewed to basic and acidic residues over residues 37–50 (GRRE…EELP) and 145–210 (LEQR…HAAE). Positions 118–241 (AMLTEEIKRI…YKSTIQELGA (124 aa)) form a coiled coil. Polar residues predominate over residues 240–254 (GASQATGEAQPSSEA). The segment covering 258 to 273 (RGKKGKGKRGKGKKRV) has biased composition (basic residues). Residues 299 to 788 (AGDEIIEAIE…LSTQLKMSKD (490 aa)) adopt a coiled-coil conformation. Over residues 788 to 807 (DMSSQSRHSSRSGSLVSPSS) the composition is skewed to low complexity. Positions 808 to 822 (DNETGNSPRKISISS) are enriched in polar residues. Residues 837-885 (EMESNEKLAYIRNVLLGFLEHREQRSQLLPVVSTLLQLSSHDEKRLLTS) enclose the GRIP domain.

The protein localises to the cytoplasm. It localises to the golgi apparatus membrane. Functionally, involved in vesicular transport between an endosomal compartment and the Golgi apparatus. This is Golgin IMH1 (IMH1) from Eremothecium gossypii (strain ATCC 10895 / CBS 109.51 / FGSC 9923 / NRRL Y-1056) (Yeast).